A 481-amino-acid chain; its full sequence is NADH-quinone oxidoreductase subunit N (481 aa).

13 helical membrane passes run 9 to 29 (MLPE…GIVV), 39 to 59 (AVSM…DHVA), 76 to 96 (CISR…FLCA), 104 to 124 (FSVV…AGHF), 158 to 178 (FFIL…LVYG), 205 to 225 (AFVL…MWAV), 232 to 252 (PMAA…LLLA), 265 to 285 (ILYG…LGAL), 293 to 313 (LLAY…VLHG), 318 to 338 (AIFH…SVLL), 359 to 379 (FVAF…PFLG), 399 to 419 (VAFP…FYCF), and 443 to 463 (LGLT…LFLA).

It belongs to the complex I subunit 2 family. As to quaternary structure, NDH-1 is composed of 14 different subunits. Subunits NuoA, H, J, K, L, M, N constitute the membrane sector of the complex.

The protein resides in the cell inner membrane. The enzyme catalyses a quinone + NADH + 5 H(+)(in) = a quinol + NAD(+) + 4 H(+)(out). In terms of biological role, NDH-1 shuttles electrons from NADH, via FMN and iron-sulfur (Fe-S) centers, to quinones in the respiratory chain. The immediate electron acceptor for the enzyme in this species is believed to be ubiquinone. Couples the redox reaction to proton translocation (for every two electrons transferred, four hydrogen ions are translocated across the cytoplasmic membrane), and thus conserves the redox energy in a proton gradient. This chain is NADH-quinone oxidoreductase subunit N, found in Anaplasma marginale (strain Florida).